The sequence spans 510 residues: GMP synthase [glutamine-hydrolyzing] (510 aa).

The Glutamine amidotransferase type-1 domain occupies 5–195; it reads MIVVLDFGSQ…VFEVCGCRGD (191 aa). Residue Cys82 is the Nucleophile of the active site. Active-site residues include His169 and Glu171. Residues 196–385 form the GMPS ATP-PPase domain; that stretch reads WTMENFIDEQ…LGIPDEIVWR (190 aa). Position 223 to 229 (223 to 229) interacts with ATP; the sequence is SGGVDSS.

In terms of assembly, homodimer.

The catalysed reaction is XMP + L-glutamine + ATP + H2O = GMP + L-glutamate + AMP + diphosphate + 2 H(+). Its pathway is purine metabolism; GMP biosynthesis; GMP from XMP (L-Gln route): step 1/1. Catalyzes the synthesis of GMP from XMP. The protein is GMP synthase [glutamine-hydrolyzing] of Geobacillus kaustophilus (strain HTA426).